Reading from the N-terminus, the 584-residue chain is Transcription factor 7-like 1 (584 aa).

Gly residues predominate over residues 1–28 (MPQLGGGRGGAGGGGGGSGAGATSGGDD). Residues 1–71 (MPQLGGGRGG…VKSSLVNESE (71 aa)) form a CTNNB1-binding region. Disordered regions lie at residues 1–99 (MPQL…RDYF), 159–179 (ATVK…VPVV), and 194–231 (YSND…SPYY). Over residues 64 to 78 (SSLVNESENQSSSSD) the composition is skewed to low complexity. Positions 80 to 99 (EAERRPQPARDAFQKPRDYF) are enriched in basic and acidic residues. Positions 342-410 (VKKPLNAFML…LHAQLYPTWS (69 aa)) form a DNA-binding region, HMG box. Positions 412–501 (RDNYGKKKKR…HSEQAQPLSL (90 aa)) are disordered. A Nuclear localization signal motif is present at residues 417–423 (KKKKRKR). Low complexity-rich tracts occupy residues 427-437 (LSQTQSQQQIQ) and 470-491 (SALD…PAAT). A compositionally biased stretch (polar residues) spans 492–501 (HSEQAQPLSL).

It belongs to the TCF/LEF family. Binds the armadillo repeat of CTNNB1 and forms a stable complex. Interacts with DAZAP2. In terms of tissue distribution, detected in the basal layer of epidermis and in outer root sheath and bulge of hair follicles.

It is found in the nucleus. Participates in the Wnt signaling pathway. Binds to DNA and acts as a repressor in the absence of CTNNB1, and as an activator in its presence. Necessary for the terminal differentiation of epidermal cells, the formation of keratohyalin granules and the development of the barrier function of the epidermis. This is Transcription factor 7-like 1 (Tcf7l1) from Mus musculus (Mouse).